The chain runs to 185 residues: Translocon-associated protein subunit gamma (185 aa).

Residue Met1 is modified to N-acetylmethionine. At 1-27 (MAPKGGSKQQSEEDLLLQDFSRNLSAK) the chain is on the lumenal side. Residues Ser7 and Ser11 each carry the phosphoserine modification. Residues 28-48 (SSALFFGNAFIVSAIPIWLYW) traverse the membrane as a helical segment. The Cytoplasmic segment spans residues 49 to 54 (RIWHMD). The helical transmembrane segment at 55 to 76 (LIQSAVLYSVMTLVSTYLVAFA) threads the bilayer. Topologically, residues 77 to 135 (YKNVKFVLKHKVAQKREDAVSKEVTRKLSEADNRKMSRKEKDERILWKKNEVADYEATT) are lumenal. At Ser105 the chain carries Phosphoserine. The chain crosses the membrane as a helical span at residues 136–157 (FSIFYNNTLFLVLVIVASFFIL). Residues 158 to 163 (KNFNPT) are Cytoplasmic-facing. A helical transmembrane segment spans residues 164-184 (VNYILSISASSGLIALLSTGS).

It belongs to the TRAP-gamma family. As to quaternary structure, heterotetramer of TRAP-alpha, TRAP-beta, TRAP-delta and TRAP-gamma.

It is found in the endoplasmic reticulum membrane. Functionally, TRAP proteins are part of a complex whose function is to bind calcium to the ER membrane and thereby regulate the retention of ER resident proteins. The polypeptide is Translocon-associated protein subunit gamma (Ssr3) (Mus musculus (Mouse)).